The primary structure comprises 181 residues: Large ribosomal subunit protein uL5 (181 aa).

It belongs to the universal ribosomal protein uL5 family. In terms of assembly, part of the 50S ribosomal subunit; part of the 5S rRNA/L5/L18/L25 subcomplex. Contacts the 5S rRNA and the P site tRNA. Forms a bridge to the 30S subunit in the 70S ribosome.

Functionally, this is one of the proteins that bind and probably mediate the attachment of the 5S RNA into the large ribosomal subunit, where it forms part of the central protuberance. In the 70S ribosome it contacts protein S13 of the 30S subunit (bridge B1b), connecting the 2 subunits; this bridge is implicated in subunit movement. Contacts the P site tRNA; the 5S rRNA and some of its associated proteins might help stabilize positioning of ribosome-bound tRNAs. This chain is Large ribosomal subunit protein uL5, found in Clostridium kluyveri (strain NBRC 12016).